The following is a 945-amino-acid chain: Netrin receptor UNC5B (945 aa).

The signal sequence occupies residues 1–26 (MRARSGVRSALLLALLLCWDPTPSLA). Residues 27–377 (GVDSAGQVLP…LETSGDVALY (351 aa)) are Extracellular-facing. Positions 48–145 (PYFLLEPQDA…SGTTKSRRAY (98 aa)) constitute an Ig-like domain. 9 cysteine pairs are disulfide-bonded: Cys-69/Cys-130, Cys-81/Cys-128, Cys-174/Cys-225, Cys-258/Cys-295, Cys-262/Cys-299, Cys-273/Cys-285, Cys-314/Cys-348, Cys-318/Cys-353, and Cys-326/Cys-338. The Ig-like C2-type domain occupies 153–242 (KNFDQEPLAK…KRRSTTATVI (90 aa)). The N-linked (GlcNAc...) asparagine glycan is linked to Asn-222. 2 consecutive TSP type-1 domains span residues 246-300 (NGGW…TVCP) and 302-354 (DGAW…GLCV). N-linked (GlcNAc...) asparagine glycosylation is present at Asn-347. A helical transmembrane segment spans residues 378 to 398 (AGLVVAVFVVVAVLMAVGVIV). Topologically, residues 399 to 945 (YRRNCRDFDT…LVAMATDGDC (547 aa)) are cytoplasmic. Cys-403 carries the S-palmitoyl cysteine lipid modification. Positions 543 to 686 (SSVSGTFGCL…LGTYVFMGES (144 aa)) constitute a ZU5 domain. Tyr-581 carries the post-translational modification Phosphotyrosine. The interval 689–838 (RSAVKRLQLA…AETPAGSLDA (150 aa)) is UPA domain. The segment at 707 to 725 (SLEYSLRVYCLEDTPVALK) is interaction with DCC. In terms of domain architecture, Death spans 865–943 (KICSSLDAPN…EMLVAMATDG (79 aa)).

This sequence belongs to the unc-5 family. As to quaternary structure, interacts with the cytoplasmic part of DCC. Interacts with GNAI2 via its cytoplasmic part. Interacts (via death domain) with DAPK1 (via death domain). Interacts (via extracellular domain) with FLRT2 and FLRT3 (via extracellular domain), but has higher affinity for FLRT3. Identified in a complex with FLRT3 and ADGRL3; does not interact with ADGRL3 by itself. Phosphorylated on cytoplasmic tyrosine residues. In terms of processing, palmitoylation is required for pro-apoptotic activity, but not for location at lipid rafts. Post-translationally, proteolytically cleaved by caspases during apoptosis. The cleavage does not take place when the receptor is associated with netrin ligand. Its cleavage by caspases is required to induce apoptosis. As to expression, highly expressed in brain. Expressed in lung during late development. Expressed during early blood vessel formation, in the semicircular canal and in a dorsal to ventral gradient in the retina.

Its subcellular location is the cell membrane. The protein resides in the membrane raft. Receptor for netrin required for axon guidance. Mediates axon repulsion of neuronal growth cones in the developing nervous system upon ligand binding. Axon repulsion in growth cones may be caused by its association with DCC that may trigger signaling for repulsion. Functions as a netrin receptor that negatively regulates vascular branching during angiogenesis. Mediates retraction of tip cell filopodia on endothelial growth cones in response to netrin. It also acts as a dependence receptor required for apoptosis induction when not associated with netrin ligand. Mediates apoptosis by activating DAPK1. In the absence of NTN1, activates DAPK1 by reducing its autoinhibitory phosphorylation at Ser-308 thereby increasing its catalytic activity. In Mus musculus (Mouse), this protein is Netrin receptor UNC5B (Unc5b).